Reading from the N-terminus, the 207-residue chain is MAKYIGPKCKLARREKTDLFLKSGVRSIDTKCKLEQPPGQHGQRRGGRMSDYGLQLREKQKVRRMYGIMERQFRNYYKEAARRKAATGTALLQLLESRLDNVCYRMGFGSTRAEARQLVNHRGVLVNGRVVNIPSYQVQPGDTVSVKEKAKSQLRIQAALELAQQNGWASWVDVDATKMEGVFKQAPDRADLSQEINESLIVELYSK.

The region spanning 97–159 (SRLDNVCYRM…AKSQLRIQAA (63 aa)) is the S4 RNA-binding domain.

This sequence belongs to the universal ribosomal protein uS4 family. In terms of assembly, part of the 30S ribosomal subunit. Contacts protein S5. The interaction surface between S4 and S5 is involved in control of translational fidelity.

Functionally, one of the primary rRNA binding proteins, it binds directly to 16S rRNA where it nucleates assembly of the body of the 30S subunit. Its function is as follows. With S5 and S12 plays an important role in translational accuracy. In Halorhodospira halophila (strain DSM 244 / SL1) (Ectothiorhodospira halophila (strain DSM 244 / SL1)), this protein is Small ribosomal subunit protein uS4.